We begin with the raw amino-acid sequence, 66 residues long: MRARELRAQTLDQMKDELVKLKKEQFNLRFQKATGQLEKVSRVKQVRRDIARVKTFLRQKINENKV.

This sequence belongs to the universal ribosomal protein uL29 family.

This is Large ribosomal subunit protein uL29 from Bartonella henselae (strain ATCC 49882 / DSM 28221 / CCUG 30454 / Houston 1) (Rochalimaea henselae).